A 122-amino-acid polypeptide reads, in one-letter code: Protein GL2-INTERACTING REPRESSOR 1 (122 aa).

Residues 1-10 (MSRRSPKLEL) are compositionally biased toward basic and acidic residues. The disordered stretch occupies residues 1-62 (MSRRSPKLEL…PSVRYSTSPE (62 aa)). The short motif at 7–12 (KLELKL) is the EAR element. The segment covering 27-46 (SPSRSATTSPTSPPSSCVSS) has biased composition (low complexity). Residues 47 to 62 (EMNQDEPSVRYSTSPE) show a composition bias toward polar residues.

Interacts with GL2. Interacts with TPL. In terms of tissue distribution, expressed in root and shoot meristems.

The protein resides in the nucleus. Acts as a negative regulator of root hair development redundantly with GIR2. GIR1 and GIR2 may function as adapter proteins that associate with GL2 and participate in the control of root hair formation. GIR1 and GIR2 may function as adapter proteins that associate with TPL and participate in the repression of root gene expression. The protein is Protein GL2-INTERACTING REPRESSOR 1 of Arabidopsis thaliana (Mouse-ear cress).